A 204-amino-acid polypeptide reads, in one-letter code: LexA repressor (204 aa).

Residues 28–48 constitute a DNA-binding region (H-T-H motif); sequence VREIGQAVGLASSSTVHGHLS. Active-site for autocatalytic cleavage activity residues include Ser-126 and Lys-164.

It belongs to the peptidase S24 family. As to quaternary structure, homodimer.

It carries out the reaction Hydrolysis of Ala-|-Gly bond in repressor LexA.. Its function is as follows. Represses a number of genes involved in the response to DNA damage (SOS response), including recA and lexA. In the presence of single-stranded DNA, RecA interacts with LexA causing an autocatalytic cleavage which disrupts the DNA-binding part of LexA, leading to derepression of the SOS regulon and eventually DNA repair. The protein is LexA repressor of Bacillus mycoides (strain KBAB4) (Bacillus weihenstephanensis).